The primary structure comprises 296 residues: Small ribosomal subunit biogenesis GTPase RsgA (296 aa).

The 162-residue stretch at 65–226 folds into the CP-type G domain; it reads TNELIRPPIS…VADTPGFSSL (162 aa). GTP contacts are provided by residues 114–117 and 169–177; these read TKMD and GQSGVGKSS. Residues cysteine 250, cysteine 255, histidine 257, and cysteine 263 each coordinate Zn(2+).

The protein belongs to the TRAFAC class YlqF/YawG GTPase family. RsgA subfamily. Monomer. Associates with 30S ribosomal subunit, binds 16S rRNA. Zn(2+) serves as cofactor.

It localises to the cytoplasm. Its function is as follows. One of several proteins that assist in the late maturation steps of the functional core of the 30S ribosomal subunit. Helps release RbfA from mature subunits. May play a role in the assembly of ribosomal proteins into the subunit. Circularly permuted GTPase that catalyzes slow GTP hydrolysis, GTPase activity is stimulated by the 30S ribosomal subunit. The polypeptide is Small ribosomal subunit biogenesis GTPase RsgA (Bacillus velezensis (strain DSM 23117 / BGSC 10A6 / LMG 26770 / FZB42) (Bacillus amyloliquefaciens subsp. plantarum)).